A 252-amino-acid polypeptide reads, in one-letter code: Pyridoxine 5'-phosphate synthase (252 aa).

Asn-12 contributes to the 3-amino-2-oxopropyl phosphate binding site. 1-deoxy-D-xylulose 5-phosphate is bound at residue 14 to 15 (DH). Residue Arg-23 coordinates 3-amino-2-oxopropyl phosphate. The active-site Proton acceptor is the His-48. Arg-50 and His-55 together coordinate 1-deoxy-D-xylulose 5-phosphate. Catalysis depends on Glu-75, which acts as the Proton acceptor. Thr-105 is a binding site for 1-deoxy-D-xylulose 5-phosphate. His-199 (proton donor) is an active-site residue. 3-amino-2-oxopropyl phosphate is bound by residues Gly-200 and 221–222 (GH).

Belongs to the PNP synthase family. As to quaternary structure, homooctamer; tetramer of dimers.

It is found in the cytoplasm. The enzyme catalyses 3-amino-2-oxopropyl phosphate + 1-deoxy-D-xylulose 5-phosphate = pyridoxine 5'-phosphate + phosphate + 2 H2O + H(+). It functions in the pathway cofactor biosynthesis; pyridoxine 5'-phosphate biosynthesis; pyridoxine 5'-phosphate from D-erythrose 4-phosphate: step 5/5. Its function is as follows. Catalyzes the complicated ring closure reaction between the two acyclic compounds 1-deoxy-D-xylulose-5-phosphate (DXP) and 3-amino-2-oxopropyl phosphate (1-amino-acetone-3-phosphate or AAP) to form pyridoxine 5'-phosphate (PNP) and inorganic phosphate. The chain is Pyridoxine 5'-phosphate synthase from Cereibacter sphaeroides (strain ATCC 17029 / ATH 2.4.9) (Rhodobacter sphaeroides).